The following is a 147-amino-acid chain: Deoxyuridine 5'-triphosphate nucleotidohydrolase (147 aa).

Residues 67–69 (RSG), Asn-80, and 84–86 (TID) contribute to the substrate site.

This sequence belongs to the dUTPase family. Mg(2+) is required as a cofactor.

It catalyses the reaction dUTP + H2O = dUMP + diphosphate + H(+). It functions in the pathway pyrimidine metabolism; dUMP biosynthesis; dUMP from dCTP (dUTP route): step 2/2. Functionally, this enzyme is involved in nucleotide metabolism: it produces dUMP, the immediate precursor of thymidine nucleotides and it decreases the intracellular concentration of dUTP so that uracil cannot be incorporated into DNA. This is Deoxyuridine 5'-triphosphate nucleotidohydrolase from Anaeromyxobacter dehalogenans (strain 2CP-1 / ATCC BAA-258).